The sequence spans 119 residues: Large ribosomal subunit protein uL18 (119 aa).

This sequence belongs to the universal ribosomal protein uL18 family. In terms of assembly, part of the 50S ribosomal subunit; part of the 5S rRNA/L5/L18/L25 subcomplex. Contacts the 5S and 23S rRNAs.

Functionally, this is one of the proteins that bind and probably mediate the attachment of the 5S RNA into the large ribosomal subunit, where it forms part of the central protuberance. The sequence is that of Large ribosomal subunit protein uL18 from Chelativorans sp. (strain BNC1).